Consider the following 100-residue polypeptide: Colipase-like protein 2 (100 aa).

Residues 1–21 form the signal peptide; the sequence is MAAALALVAGVLSGAVLPLWS. 5 disulfides stabilise this stretch: Cys34–Cys45, Cys40–Cys56, Cys44–Cys78, Cys66–Cys86, and Cys80–Cys97.

The protein belongs to the colipase family.

It localises to the secreted. The chain is Colipase-like protein 2 (CLPSL2) from Homo sapiens (Human).